Reading from the N-terminus, the 255-residue chain is 5-oxoprolinase subunit A (255 aa).

This sequence belongs to the LamB/PxpA family. In terms of assembly, forms a complex composed of PxpA, PxpB and PxpC.

It catalyses the reaction 5-oxo-L-proline + ATP + 2 H2O = L-glutamate + ADP + phosphate + H(+). In terms of biological role, catalyzes the cleavage of 5-oxoproline to form L-glutamate coupled to the hydrolysis of ATP to ADP and inorganic phosphate. This is 5-oxoprolinase subunit A from Corynebacterium efficiens (strain DSM 44549 / YS-314 / AJ 12310 / JCM 11189 / NBRC 100395).